Here is a 143-residue protein sequence, read N- to C-terminus: Anti-sigma F factor (143 aa).

Belongs to the anti-sigma-factor family.

The catalysed reaction is L-seryl-[protein] + ATP = O-phospho-L-seryl-[protein] + ADP + H(+). The enzyme catalyses L-threonyl-[protein] + ATP = O-phospho-L-threonyl-[protein] + ADP + H(+). Its function is as follows. Binds to sigma F and blocks its ability to form an RNA polymerase holoenzyme (E-sigma F). Phosphorylates SpoIIAA on a serine residue. This phosphorylation may enable SpoIIAA to act as an anti-anti-sigma factor that counteracts SpoIIAB and thus releases sigma F from inhibition. The protein is Anti-sigma F factor of Clostridium botulinum (strain Alaska E43 / Type E3).